An 896-amino-acid chain; its full sequence is Translation initiation factor IF-2 (896 aa).

2 disordered regions span residues 32 to 99 and 117 to 304; these read LAQA…TALP and EITS…KQAE. Residues 35–48 are compositionally biased toward polar residues; sequence AGSSDTKNSPASKA. Over residues 153 to 169 the composition is skewed to basic and acidic residues; the sequence is TPERIEETPIIRTRTEP. A compositionally biased stretch (low complexity) spans 203–214; sequence AASTEETTQQQP. Polar residues predominate over residues 215–227; it reads RQNDAASHNNKQQ. The span at 228 to 241 shows a compositional bias: low complexity; that stretch reads PSGTSSRPASSAPS. Over residues 256–280 the composition is skewed to basic and acidic residues; the sequence is RGSERDRSKRSDESVKAFTGRDRYG. Residues 401–570 enclose the tr-type G domain; sequence IRSPIVAFMG…ALQAEVLELK (170 aa). Residues 410–417 form a G1 region; that stretch reads GHVDHGKT. 410-417 serves as a coordination point for GTP; it reads GHVDHGKT. Positions 435–439 are G2; the sequence is AITQH. Residues 456–459 form a G3 region; sequence DTPG. Residues 456–460 and 510–513 contribute to the GTP site; these read DTPGH and NKCD. Residues 510–513 are G4; it reads NKCD. The segment at 546-548 is G5; it reads SAK.

The protein belongs to the TRAFAC class translation factor GTPase superfamily. Classic translation factor GTPase family. IF-2 subfamily.

The protein resides in the cytoplasm. In terms of biological role, one of the essential components for the initiation of protein synthesis. Protects formylmethionyl-tRNA from spontaneous hydrolysis and promotes its binding to the 30S ribosomal subunits. Also involved in the hydrolysis of GTP during the formation of the 70S ribosomal complex. The sequence is that of Translation initiation factor IF-2 from Chlamydia trachomatis serovar L2 (strain ATCC VR-902B / DSM 19102 / 434/Bu).